Here is a 1407-residue protein sequence, read N- to C-terminus: Probable phosphoribosylformylglycinamidine synthase, chloroplastic/mitochondrial (1407 aa).

The N-terminal 53 residues, 1–53, are a transit peptide targeting the chloroplast and mitochondrion; sequence MNTSQATRAALFLNGSNRQAMLLQRSSMSQLWGSVRMRTSRLSLNRTKAVSLR. Residues 407–418, 487–489, and A786 each bind ATP; these read GAETGAGGRIRD and QGY. 4 residues coordinate Mg(2+): D787, E826, N830, and D989. S991 serves as a coordination point for ATP. Residues 1141–1381 enclose the Glutamine amidotransferase type-1 domain; it reads KVAVIREEGS…LMWQFPWYPT (241 aa). C1235 (nucleophile) is an active-site residue. Residues H1366 and E1368 contribute to the active site.

This sequence in the N-terminal section; belongs to the FGAMS family.

Its subcellular location is the plastid. The protein localises to the chloroplast. It localises to the mitochondrion. It carries out the reaction N(2)-formyl-N(1)-(5-phospho-beta-D-ribosyl)glycinamide + L-glutamine + ATP + H2O = 2-formamido-N(1)-(5-O-phospho-beta-D-ribosyl)acetamidine + L-glutamate + ADP + phosphate + H(+). Its pathway is purine metabolism; IMP biosynthesis via de novo pathway; 5-amino-1-(5-phospho-D-ribosyl)imidazole from N(2)-formyl-N(1)-(5-phospho-D-ribosyl)glycinamide: step 1/2. Essential to the male gametophyte development. Phosphoribosylformylglycinamidine synthase involved in the purines biosynthetic pathway. Catalyzes the ATP-dependent conversion of formylglycinamide ribonucleotide (FGAR) and glutamine to yield formylglycinamidine ribonucleotide (FGAM) and glutamate. This chain is Probable phosphoribosylformylglycinamidine synthase, chloroplastic/mitochondrial, found in Arabidopsis thaliana (Mouse-ear cress).